Here is a 332-residue protein sequence, read N- to C-terminus: Putative pumilio homolog 17 (332 aa).

One can recognise a PUM-HD domain in the interval 1–302; it reads MTNINRLSMS…ILTADLFYSL (302 aa). The Pumilio 1 repeat unit spans residues 82 to 117; sequence SDSDYFMVITRNKNGSKSLQKLMRMSDDMDVFFFVA. One copy of the Pumilio 2; degenerate repeat lies at 118 to 152; sequence IMRLFIHVMIDKYASYVAIQGMRIFKQDKRELMYD. Pumilio repeat units lie at residues 153-188, 189-225, 226-264, and 265-300; these read HILR…DELM, DIVS…NIAD, KLCG…DLLA, and CKTE…DLFY.

Its subcellular location is the cytoplasm. Functionally, sequence-specific RNA-binding protein that regulates translation and mRNA stability by binding the 3'-UTR of target mRNAs. The chain is Putative pumilio homolog 17 (APUM17) from Arabidopsis thaliana (Mouse-ear cress).